A 122-amino-acid polypeptide reads, in one-letter code: Large ribosomal subunit protein uL14 (122 aa).

The protein belongs to the universal ribosomal protein uL14 family. In terms of assembly, part of the 50S ribosomal subunit. Forms a cluster with proteins L3 and L19. In the 70S ribosome, L14 and L19 interact and together make contacts with the 16S rRNA in bridges B5 and B8.

Binds to 23S rRNA. Forms part of two intersubunit bridges in the 70S ribosome. The polypeptide is Large ribosomal subunit protein uL14 (Roseiflexus castenholzii (strain DSM 13941 / HLO8)).